Consider the following 226-residue polypeptide: Enolase-phosphatase E1 (226 aa).

This sequence belongs to the HAD-like hydrolase superfamily. MasA/MtnC family. As to quaternary structure, monomer. It depends on Mg(2+) as a cofactor.

It carries out the reaction 5-methylsulfanyl-2,3-dioxopentyl phosphate + H2O = 1,2-dihydroxy-5-(methylsulfanyl)pent-1-en-3-one + phosphate. The protein operates within amino-acid biosynthesis; L-methionine biosynthesis via salvage pathway; L-methionine from S-methyl-5-thio-alpha-D-ribose 1-phosphate: step 3/6. It participates in amino-acid biosynthesis; L-methionine biosynthesis via salvage pathway; L-methionine from S-methyl-5-thio-alpha-D-ribose 1-phosphate: step 4/6. Functionally, bifunctional enzyme that catalyzes the enolization of 2,3-diketo-5-methylthiopentyl-1-phosphate (DK-MTP-1-P) into the intermediate 2-hydroxy-3-keto-5-methylthiopentenyl-1-phosphate (HK-MTPenyl-1-P), which is then dephosphorylated to form the acireductone 1,2-dihydroxy-3-keto-5-methylthiopentene (DHK-MTPene). In Shewanella baltica (strain OS155 / ATCC BAA-1091), this protein is Enolase-phosphatase E1.